A 1225-amino-acid polypeptide reads, in one-letter code: Mediator of RNA polymerase II transcription subunit 13 (1225 aa).

It belongs to the Mediator complex subunit 13 family. Component of the srb8-11 complex which consists of rb8, srb9(TRAP240), srb10 and srb11. The srb8-11 complex associates with the Mediator complex thereby blocking association with RNA polymerase II and leading to reduced transcriptional activation by Mediator.

It localises to the nucleus. Its function is as follows. Component of the srb8-11 complex. The srb8-11 complex is a regulatory module of the Mediator complex which is itself involved in regulation of basal and activated RNA polymerase II-dependent transcription. The srb8-11 complex may be involved in the transcriptional repression of a subset of genes regulated by Mediator. It may inhibit the association of the Mediator complex with RNA polymerase II to form the holoenzyme complex. This is Mediator of RNA polymerase II transcription subunit 13 (srb9) from Schizosaccharomyces pombe (strain 972 / ATCC 24843) (Fission yeast).